The primary structure comprises 395 residues: Putative F-box protein At5g42430 (395 aa).

The F-box domain maps to 4-53; that stretch reads EENSDSIPIDLILEILSRLPAKSITRFHCVSKLWGSMLCRPYFNELFLTI.

In Arabidopsis thaliana (Mouse-ear cress), this protein is Putative F-box protein At5g42430.